The following is a 227-amino-acid chain: 2-C-methyl-D-erythritol 4-phosphate cytidylyltransferase (227 aa).

It belongs to the IspD/TarI cytidylyltransferase family. IspD subfamily.

It carries out the reaction 2-C-methyl-D-erythritol 4-phosphate + CTP + H(+) = 4-CDP-2-C-methyl-D-erythritol + diphosphate. The protein operates within isoprenoid biosynthesis; isopentenyl diphosphate biosynthesis via DXP pathway; isopentenyl diphosphate from 1-deoxy-D-xylulose 5-phosphate: step 2/6. Catalyzes the formation of 4-diphosphocytidyl-2-C-methyl-D-erythritol from CTP and 2-C-methyl-D-erythritol 4-phosphate (MEP). This Petrotoga mobilis (strain DSM 10674 / SJ95) protein is 2-C-methyl-D-erythritol 4-phosphate cytidylyltransferase.